A 43-amino-acid polypeptide reads, in one-letter code: Cuticle protein CP434 (43 aa).

Repeat copies occupy residues 1-18 (ALVGPSGMILADGTPVQF) and 25-42 (VLTGPSGIVFSNGQNIQL).

As to expression, calcified shell.

The protein is Cuticle protein CP434 of Cancer pagurus (Rock crab).